We begin with the raw amino-acid sequence, 120 residues long: Large ribosomal subunit protein bL12 (120 aa).

Belongs to the bacterial ribosomal protein bL12 family. As to quaternary structure, homodimer. Part of the ribosomal stalk of the 50S ribosomal subunit. Forms a multimeric L10(L12)X complex, where L10 forms an elongated spine to which 2 to 4 L12 dimers bind in a sequential fashion. Binds GTP-bound translation factors.

Forms part of the ribosomal stalk which helps the ribosome interact with GTP-bound translation factors. Is thus essential for accurate translation. In Shouchella clausii (strain KSM-K16) (Alkalihalobacillus clausii), this protein is Large ribosomal subunit protein bL12.